Reading from the N-terminus, the 659-residue chain is Delta(6)-protoilludene synthase (659 aa).

Mg(2+) is bound by residues aspartate 91, asparagine 227, serine 231, and glutamate 235. Positions 91–95 (DEHTD) match the DDXXD motif motif. 2 residues coordinate (2E,6E)-farnesyl diphosphate: arginine 316 and tyrosine 317. The interval 528-586 (PQFSKTSGAPNGAHTPTTTNGSIKSNGFVSGDTNGHANGNGHVQTRSSTPSSSSSSTSS) is disordered. A compositionally biased stretch (polar residues) spans 530-573 (FSKTSGAPNGAHTPTTTNGSIKSNGFVSGDTNGHANGNGHVQTR). A compositionally biased stretch (low complexity) spans 574 to 586 (SSTPSSSSSSTSS).

Belongs to the terpene synthase family. Mg(2+) is required as a cofactor.

The catalysed reaction is (2E,6E)-farnesyl diphosphate = Delta(6)-protoilludene + diphosphate. Functionally, terpene cyclase that catalyzes the cyclization of farnesyl diphosphate (FPP) to delta(6)-protoilludene. The sequence is that of Delta(6)-protoilludene synthase from Cyclocybe aegerita (Black poplar mushroom).